Consider the following 294-residue polypeptide: N-acetylmuramic acid 6-phosphate etherase (294 aa).

An SIS domain is found at 56–219; that stretch reads TSYSLKNGGR…STLSMVSVGK (164 aa). Glu-84 (proton donor) is an active-site residue. Residue Glu-115 is part of the active site.

It belongs to the GCKR-like family. MurNAc-6-P etherase subfamily. As to quaternary structure, homodimer.

The catalysed reaction is N-acetyl-D-muramate 6-phosphate + H2O = N-acetyl-D-glucosamine 6-phosphate + (R)-lactate. It functions in the pathway amino-sugar metabolism; 1,6-anhydro-N-acetylmuramate degradation. Its pathway is amino-sugar metabolism; N-acetylmuramate degradation. It participates in cell wall biogenesis; peptidoglycan recycling. Its function is as follows. Specifically catalyzes the cleavage of the D-lactyl ether substituent of MurNAc 6-phosphate, producing GlcNAc 6-phosphate and D-lactate. Together with AnmK, is also required for the utilization of anhydro-N-acetylmuramic acid (anhMurNAc) either imported from the medium or derived from its own cell wall murein, and thus plays a role in cell wall recycling. The sequence is that of N-acetylmuramic acid 6-phosphate etherase from Francisella tularensis subsp. novicida (strain U112).